Consider the following 147-residue polypeptide: UPF0251 protein CTC_01373 (147 aa).

Belongs to the UPF0251 family.

This Clostridium tetani (strain Massachusetts / E88) protein is UPF0251 protein CTC_01373.